A 311-amino-acid chain; its full sequence is Malate dehydrogenase (311 aa).

NAD(+) is bound by residues 7 to 12 (GAGNVG) and Asp32. Arg82 and Arg88 together coordinate substrate. Residues Asn95 and 118 to 120 (VSN) contribute to the NAD(+) site. 2 residues coordinate substrate: Asn120 and Arg151. The active-site Proton acceptor is His175.

This sequence belongs to the LDH/MDH superfamily. MDH type 3 family.

It carries out the reaction (S)-malate + NAD(+) = oxaloacetate + NADH + H(+). Functionally, catalyzes the reversible oxidation of malate to oxaloacetate. This is Malate dehydrogenase from Flavobacterium johnsoniae (strain ATCC 17061 / DSM 2064 / JCM 8514 / BCRC 14874 / CCUG 350202 / NBRC 14942 / NCIMB 11054 / UW101) (Cytophaga johnsonae).